The chain runs to 364 residues: tRNA 2-selenouridine synthase (364 aa).

One can recognise a Rhodanese domain in the interval 14 to 137 (LIADTPIIDV…LRQTAIQATI (124 aa)). Catalysis depends on cysteine 97, which acts as the S-selanylcysteine intermediate.

Belongs to the SelU family. In terms of assembly, monomer.

It catalyses the reaction 5-methylaminomethyl-2-thiouridine(34) in tRNA + selenophosphate + (2E)-geranyl diphosphate + H2O + H(+) = 5-methylaminomethyl-2-selenouridine(34) in tRNA + (2E)-thiogeraniol + phosphate + diphosphate. The enzyme catalyses 5-methylaminomethyl-2-thiouridine(34) in tRNA + (2E)-geranyl diphosphate = 5-methylaminomethyl-S-(2E)-geranyl-thiouridine(34) in tRNA + diphosphate. The catalysed reaction is 5-methylaminomethyl-S-(2E)-geranyl-thiouridine(34) in tRNA + selenophosphate + H(+) = 5-methylaminomethyl-2-(Se-phospho)selenouridine(34) in tRNA + (2E)-thiogeraniol. It carries out the reaction 5-methylaminomethyl-2-(Se-phospho)selenouridine(34) in tRNA + H2O = 5-methylaminomethyl-2-selenouridine(34) in tRNA + phosphate. Involved in the post-transcriptional modification of the uridine at the wobble position (U34) of tRNA(Lys), tRNA(Glu) and tRNA(Gln). Catalyzes the conversion of 2-thiouridine (S2U-RNA) to 2-selenouridine (Se2U-RNA). Acts in a two-step process involving geranylation of 2-thiouridine (S2U) to S-geranyl-2-thiouridine (geS2U) and subsequent selenation of the latter derivative to 2-selenouridine (Se2U) in the tRNA chain. This Shigella flexneri protein is tRNA 2-selenouridine synthase.